Reading from the N-terminus, the 396-residue chain is 1-deoxy-D-xylulose 5-phosphate reductoisomerase (396 aa).

Positions 15, 16, 17, 18, 41, and 130 each coordinate NADPH. Residue K131 coordinates 1-deoxy-D-xylulose 5-phosphate. NADPH is bound at residue E132. D155 provides a ligand contact to Mn(2+). 1-deoxy-D-xylulose 5-phosphate is bound by residues S156, E157, S181, and H204. E157 serves as a coordination point for Mn(2+). Position 210 (G210) interacts with NADPH. The 1-deoxy-D-xylulose 5-phosphate site is built by S217, N222, K223, and E226. E226 contacts Mn(2+).

It belongs to the DXR family. Mg(2+) serves as cofactor. The cofactor is Mn(2+).

It catalyses the reaction 2-C-methyl-D-erythritol 4-phosphate + NADP(+) = 1-deoxy-D-xylulose 5-phosphate + NADPH + H(+). Its pathway is isoprenoid biosynthesis; isopentenyl diphosphate biosynthesis via DXP pathway; isopentenyl diphosphate from 1-deoxy-D-xylulose 5-phosphate: step 1/6. In terms of biological role, catalyzes the NADPH-dependent rearrangement and reduction of 1-deoxy-D-xylulose-5-phosphate (DXP) to 2-C-methyl-D-erythritol 4-phosphate (MEP). This is 1-deoxy-D-xylulose 5-phosphate reductoisomerase from Bifidobacterium longum subsp. infantis (strain ATCC 15697 / DSM 20088 / JCM 1222 / NCTC 11817 / S12).